Reading from the N-terminus, the 699-residue chain is UvrABC system protein C (699 aa).

Residues 1–51 are compositionally biased toward low complexity; the sequence is MIQHPTDTPEVAADAAAEPERAAGAAGATPQPSQDAVEPAADVDAATASLA. The segment at 1-59 is disordered; sequence MIQHPTDTPEVAADAAAEPERAAGAAGATPQPSQDAVEPAADVDAATASLAAEDDDEPV. The region spanning 92-170 is the GIY-YIG domain; sequence TSPGVYRMLN…IKQLRPRFNV (79 aa). The 36-residue stretch at 280–315 folds into the UVR domain; sequence RLVKQELAGEMEKASAELEFETAALYRDRLAALSAI.

Belongs to the UvrC family. Interacts with UvrB in an incision complex.

It localises to the cytoplasm. Its function is as follows. The UvrABC repair system catalyzes the recognition and processing of DNA lesions. UvrC both incises the 5' and 3' sides of the lesion. The N-terminal half is responsible for the 3' incision and the C-terminal half is responsible for the 5' incision. The sequence is that of UvrABC system protein C from Rhodopseudomonas palustris (strain BisB18).